Consider the following 205-residue polypeptide: Deoxyuridine 5'-triphosphate nucleotidohydrolase (205 aa).

S54 carries the post-translational modification Phosphoserine. Residues 126–128, 140–143, G151, and 199–200 contribute to the substrate site; these read RSG, GVID, and FG.

The protein belongs to the dUTPase family. In terms of assembly, homotrimer. Mg(2+) is required as a cofactor. Expressed in all tissues examined. Higher levels in heart and kidney.

Its subcellular location is the cytoplasm. It localises to the nucleus. It carries out the reaction dUTP + H2O = dUMP + diphosphate + H(+). The protein operates within pyrimidine metabolism; dUMP biosynthesis; dUMP from dCTP (dUTP route): step 2/2. Catalyzes the cleavage of 2'-deoxyuridine 5'-triphosphate (dUTP) into 2'-deoxyuridine 5'-monophosphate (dUMP) and inorganic pyrophosphate and through its action efficiently prevents uracil misincorporation into DNA and at the same time provides dUMP, the substrate for de novo thymidylate biosynthesis. Inhibits peroxisome proliferator-activated receptor (PPAR) activity by binding of its N-terminal to PPAR, preventing the latter's dimerization with retinoid X receptor. Essential for embryonic development. In Rattus norvegicus (Rat), this protein is Deoxyuridine 5'-triphosphate nucleotidohydrolase (Dut).